Consider the following 244-residue polypeptide: Isoprenyl transferase (244 aa).

Residue Asp20 is part of the active site. Asp20 serves as a coordination point for Mg(2+). Residues 21-24, Trp25, Arg33, His37, and 65-67 contribute to the substrate site; these read GNGR and SSE. Asn68 functions as the Proton acceptor in the catalytic mechanism. Substrate-binding positions include Trp69, Arg71, Arg188, and 194–196; that span reads RIS. Glu207 lines the Mg(2+) pocket.

Belongs to the UPP synthase family. Homodimer. The cofactor is Mg(2+).

Functionally, catalyzes the condensation of isopentenyl diphosphate (IPP) with allylic pyrophosphates generating different type of terpenoids. In Rhodopirellula baltica (strain DSM 10527 / NCIMB 13988 / SH1), this protein is Isoprenyl transferase.